Here is a 334-residue protein sequence, read N- to C-terminus: ELMO domain-containing protein 1 (334 aa).

The ELMO domain occupies 133 to 314 (QHEEMLLKLW…KFRKRIIKQL (182 aa)).

Acts as a GTPase-activating protein (GAP) toward guanine nucleotide exchange factors like ARL2, ARL3, ARF1 and ARF6, but not for GTPases outside the Arf family. This chain is ELMO domain-containing protein 1 (ELMOD1), found in Homo sapiens (Human).